Consider the following 66-residue polypeptide: Protein translocase subunit SecE (66 aa).

Residues 29–49 (LIASTLVVVAAVFIFSLICLV) form a helical membrane-spanning segment.

Belongs to the SecE/SEC61-gamma family. In terms of assembly, component of the Sec protein translocase complex. Heterotrimer consisting of SecY, SecE and SecG subunits. The heterotrimers can form oligomers, although 1 heterotrimer is thought to be able to translocate proteins. Interacts with the ribosome. Interacts with SecDF, and other proteins may be involved. Interacts with SecA.

It localises to the cell inner membrane. Its function is as follows. Essential subunit of the Sec protein translocation channel SecYEG. Clamps together the 2 halves of SecY. May contact the channel plug during translocation. In Rickettsia typhi (strain ATCC VR-144 / Wilmington), this protein is Protein translocase subunit SecE.